Here is a 308-residue protein sequence, read N- to C-terminus: D-alanine--D-alanine ligase (308 aa).

The ATP-grasp domain maps to 102–302 (KKVAAAAGIP…FGDLVSWMVE (201 aa)). Residue 128–183 (PLQPPYVVKPVREGSSFGVVIVKEDQSHPPQILTSSEWPFGNQVMVERYIHGRELT) participates in ATP binding. 3 residues coordinate Mg(2+): Asp252, Glu269, and Asn271.

The protein belongs to the D-alanine--D-alanine ligase family. The cofactor is Mg(2+). Mn(2+) is required as a cofactor.

It localises to the cytoplasm. It carries out the reaction 2 D-alanine + ATP = D-alanyl-D-alanine + ADP + phosphate + H(+). The protein operates within cell wall biogenesis; peptidoglycan biosynthesis. Its function is as follows. Cell wall formation. The chain is D-alanine--D-alanine ligase from Agrobacterium fabrum (strain C58 / ATCC 33970) (Agrobacterium tumefaciens (strain C58)).